A 588-amino-acid polypeptide reads, in one-letter code: Aspartate--tRNA ligase (588 aa).

Glu177 provides a ligand contact to L-aspartate. Residues 201–204 form an aspartate region; sequence QIFK. Arg223 lines the L-aspartate pocket. ATP is bound by residues 223-225 and Gln232; that span reads RDE. Residue His451 coordinates L-aspartate. Glu485 serves as a coordination point for ATP. Arg492 is a binding site for L-aspartate. 537–540 provides a ligand contact to ATP; sequence GLDR.

This sequence belongs to the class-II aminoacyl-tRNA synthetase family. Type 1 subfamily. In terms of assembly, homodimer.

The protein resides in the cytoplasm. It carries out the reaction tRNA(Asp) + L-aspartate + ATP = L-aspartyl-tRNA(Asp) + AMP + diphosphate. In terms of biological role, catalyzes the attachment of L-aspartate to tRNA(Asp) in a two-step reaction: L-aspartate is first activated by ATP to form Asp-AMP and then transferred to the acceptor end of tRNA(Asp). This chain is Aspartate--tRNA ligase, found in Staphylococcus saprophyticus subsp. saprophyticus (strain ATCC 15305 / DSM 20229 / NCIMB 8711 / NCTC 7292 / S-41).